A 52-amino-acid polypeptide reads, in one-letter code: Large ribosomal subunit protein bL33 (52 aa).

It belongs to the bacterial ribosomal protein bL33 family.

This chain is Large ribosomal subunit protein bL33, found in Anaeromyxobacter dehalogenans (strain 2CP-C).